The sequence spans 284 residues: MNNKIVKVGNIEVANDKPFTLFGGMNVLESRDMAMRVCEQYVEVTNKLGVPYVFKASFDKANRSSIHSYRGPGMEEGLKIFQELKDTFGVNIITDVHEIYQCKPVAEVVDIIQLPAFLARQTDLVEAMARTGAVINVKKPQFLSPGQMGNIVEKIAECGNENVILCDRGTNFGYDNLVVDMLGFNIMKKVSKGCPVIFDVTHSLQCRDPFGAASGGRRDQVTELARSGMAIGLAGLFLEAHPDPNNAKCDGPSALPLSKLEAFVSQMKAIDDLVKSFEEIDTSN.

The protein belongs to the KdsA family.

Its subcellular location is the cytoplasm. The enzyme catalyses D-arabinose 5-phosphate + phosphoenolpyruvate + H2O = 3-deoxy-alpha-D-manno-2-octulosonate-8-phosphate + phosphate. It functions in the pathway carbohydrate biosynthesis; 3-deoxy-D-manno-octulosonate biosynthesis; 3-deoxy-D-manno-octulosonate from D-ribulose 5-phosphate: step 2/3. The protein operates within bacterial outer membrane biogenesis; lipopolysaccharide biosynthesis. This is 2-dehydro-3-deoxyphosphooctonate aldolase from Actinobacillus pleuropneumoniae serotype 7 (strain AP76).